The following is a 107-amino-acid chain: Ribonuclease P protein component 4 (107 aa).

Zn(2+)-binding residues include C66, C69, C92, and C95.

This sequence belongs to the eukaryotic/archaeal RNase P protein component 4 family. Consists of a catalytic RNA component and at least 4-5 protein subunits. Requires Zn(2+) as cofactor.

It is found in the cytoplasm. The catalysed reaction is Endonucleolytic cleavage of RNA, removing 5'-extranucleotides from tRNA precursor.. In terms of biological role, part of ribonuclease P, a protein complex that generates mature tRNA molecules by cleaving their 5'-ends. This is Ribonuclease P protein component 4 from Methanosarcina acetivorans (strain ATCC 35395 / DSM 2834 / JCM 12185 / C2A).